A 556-amino-acid polypeptide reads, in one-letter code: Formate--tetrahydrofolate ligase (556 aa).

65 to 72 (TPAGEGKS) provides a ligand contact to ATP.

The protein belongs to the formate--tetrahydrofolate ligase family.

The catalysed reaction is (6S)-5,6,7,8-tetrahydrofolate + formate + ATP = (6R)-10-formyltetrahydrofolate + ADP + phosphate. The protein operates within one-carbon metabolism; tetrahydrofolate interconversion. The sequence is that of Formate--tetrahydrofolate ligase from Streptococcus mutans serotype c (strain ATCC 700610 / UA159).